Reading from the N-terminus, the 548-residue chain is C2H2-type transcription factor MSN2 (548 aa).

2 C2H2-type zinc fingers span residues 420–448 and 449–471; these read FKCE…QDKP and FECN…ARTH.

Interacts with HOG1/OSM1.

It is found in the nucleus. It localises to the cytoplasm. Functionally, transcription factor that acts as a key downstream transcription factor in the HOG1-MAPK pathway. Regulates the expression of a series of downstream genes and controls vegetative growth, conidiogenesis, cell wall integrity, stress response, mitochondrial morphology, and pathogenicity. Binds to a putative promoter region 1500 bp upstream of the start codons of the target genes MGG_07019, POX1 and DCI1. Binds to the AGGGG and CCCCT motif of the COS1 promoter region. Involved in fatty acid beta-oxidation by directly regulating the expression of the dienoyl-CoA isomerase DCI1, thereby facilitating invasive hyphal growth during the early infection stage. Targets also the 3-methylglutaconyl-CoA hydratase-encoding gene (AUH1) to control mitochondrial morphology and mitophagy, which are critical for the infectious growth of the pathogen. In Pyricularia oryzae (strain 70-15 / ATCC MYA-4617 / FGSC 8958) (Rice blast fungus), this protein is C2H2-type transcription factor MSN2.